Consider the following 251-residue polypeptide: Small ribosomal subunit protein uS2 (251 aa).

Belongs to the universal ribosomal protein uS2 family.

This chain is Small ribosomal subunit protein uS2, found in Azoarcus sp. (strain BH72).